A 136-amino-acid polypeptide reads, in one-letter code: Large ribosomal subunit protein uL16 (136 aa).

Belongs to the universal ribosomal protein uL16 family. In terms of assembly, part of the 50S ribosomal subunit.

In terms of biological role, binds 23S rRNA and is also seen to make contacts with the A and possibly P site tRNAs. In Actinobacillus succinogenes (strain ATCC 55618 / DSM 22257 / CCUG 43843 / 130Z), this protein is Large ribosomal subunit protein uL16.